Consider the following 307-residue polypeptide: Ribonuclease HIII (307 aa).

An RNase H type-2 domain is found at 93–307 (MSVIGSDEVG…ANTQKAKKWL (215 aa)). A divalent metal cation contacts are provided by Asp-99, Glu-100, and Asp-204.

The protein belongs to the RNase HII family. RnhC subfamily. The cofactor is Mn(2+). Requires Mg(2+) as cofactor.

Its subcellular location is the cytoplasm. The enzyme catalyses Endonucleolytic cleavage to 5'-phosphomonoester.. Functionally, endonuclease that specifically degrades the RNA of RNA-DNA hybrids. This chain is Ribonuclease HIII, found in Bacillus pumilus (strain SAFR-032).